The chain runs to 181 residues: Protein AC41 (181 aa).

Plays a role in late gene expression. This chain is Protein AC41 (AC41), found in Autographa californica nuclear polyhedrosis virus (AcMNPV).